The following is a 310-amino-acid chain: Putative S-adenosyl-L-methionine-dependent methyltransferase MMAR_0357 (310 aa).

Residues D132 and 161-162 contribute to the S-adenosyl-L-methionine site; that span reads DL.

This sequence belongs to the UPF0677 family.

Exhibits S-adenosyl-L-methionine-dependent methyltransferase activity. The polypeptide is Putative S-adenosyl-L-methionine-dependent methyltransferase MMAR_0357 (Mycobacterium marinum (strain ATCC BAA-535 / M)).